Here is a 789-residue protein sequence, read N- to C-terminus: Glycerol-3-phosphate acyltransferase (789 aa).

The short motif at 275–280 (SHRSYI) is the HXXXXD motif element.

It belongs to the GPAT/DAPAT family.

It localises to the cell membrane. The catalysed reaction is sn-glycerol 3-phosphate + an acyl-CoA = a 1-acyl-sn-glycero-3-phosphate + CoA. It functions in the pathway phospholipid metabolism; CDP-diacylglycerol biosynthesis; CDP-diacylglycerol from sn-glycerol 3-phosphate: step 1/3. The sequence is that of Glycerol-3-phosphate acyltransferase from Mycobacterium tuberculosis (strain ATCC 25177 / H37Ra).